Consider the following 406-residue polypeptide: Protein transport protein HofC homolog (406 aa).

The next 3 membrane-spanning stretches (helical) occupy residues 167-187 (MVLGISLLLTLALLLFIVPQF), 214-234 (QNIGILLFFVLSFFLFYYFYL), and 379-399 (MMVIIGSLIGIIMMGMYLPIF).

This sequence belongs to the GSP F family.

The protein localises to the cell inner membrane. The sequence is that of Protein transport protein HofC homolog (hofC) from Haemophilus influenzae (strain ATCC 51907 / DSM 11121 / KW20 / Rd).